A 427-amino-acid chain; its full sequence is UPF0597 protein FN1147 (427 aa).

It belongs to the UPF0597 family.

The sequence is that of UPF0597 protein FN1147 from Fusobacterium nucleatum subsp. nucleatum (strain ATCC 25586 / DSM 15643 / BCRC 10681 / CIP 101130 / JCM 8532 / KCTC 2640 / LMG 13131 / VPI 4355).